A 223-amino-acid polypeptide reads, in one-letter code: Endonuclease V (223 aa).

2 residues coordinate Mg(2+): Asp-35 and Asp-103.

Belongs to the endonuclease V family. It depends on Mg(2+) as a cofactor.

The protein localises to the cytoplasm. The catalysed reaction is Endonucleolytic cleavage at apurinic or apyrimidinic sites to products with a 5'-phosphate.. In terms of biological role, DNA repair enzyme involved in the repair of deaminated bases. Selectively cleaves double-stranded DNA at the second phosphodiester bond 3' to a deoxyinosine leaving behind the intact lesion on the nicked DNA. The sequence is that of Endonuclease V from Salmonella agona (strain SL483).